A 615-amino-acid polypeptide reads, in one-letter code: MSESERSEASEVFGTSPDSRLSSEDAAELEQLRREAAILREQLEDAGGLATSARAARDVHQLEARIDSLAARNAKLMDTLKEARQQLLALREEVDRLGQPPSGYGVLLSVQDDETVDVFTSGRKMRLTCSPNIETKELKKGQTVRLNEALTVVEAGHFESVGEISTLREILSDGHRALVVGHADEERIVWLAEPLVAAEHLPEGSYADEDDLTDDRPRKLRPGDSLLVDTKAGYAFERIPKAEVEDLVLEEVPDVSYNDIGGLGRQIEQIRDAVELPFLHKELYREYSLRPPKGVLLYGPPGCGKTLIAKAVANSLAKKMAEVRGDDAREAKSYFLNIKGPELLNKFVGETERHIRLIFQRAREKASEGTPVIVFFDEMDSIFRTRGTGVSSDVETTVVPQLLSEIDGVEGLENVIVIGASNREDMIDPAILRPGRLDVKIKIERPDAESAQDIFSKYLTEELPIHDDDLAEFSGDRSLTIKAMIEKVVDRMYAEIDDNRFLEVTYANGDKEVMYFKDFNSGAMIQNVVDRAKKNAIKAVLETGQRGLRIQHLLDSIIDEFAENEDLPNTTNPDDWARISGKKGERIVYIRTLVTGKSSSASRAIDTESNLGQYL.

Residues 1–27 (MSESERSEASEVFGTSPDSRLSSEDAA) are disordered. Residues 22–99 (SSEDAAELEQ…LREEVDRLGQ (78 aa)) adopt a coiled-coil conformation. Position 302–307 (302–307 (GCGKTL)) interacts with ATP. The interval 614–615 (YL) is docks into pockets in the proteasome alpha-ring.

The protein belongs to the AAA ATPase family. In terms of assembly, homohexamer. Assembles into a hexameric ring structure that caps the 20S proteasome core. Strongly interacts with the prokaryotic ubiquitin-like protein Pup through a hydrophobic interface; the interacting region of ARC lies in its N-terminal coiled-coil domain. There is one Pup binding site per ARC hexamer ring. Upon ATP-binding, the C-terminus of ARC interacts with the alpha-rings of the proteasome core, possibly by binding to the intersubunit pockets.

It participates in protein degradation; proteasomal Pup-dependent pathway. Its function is as follows. ATPase which is responsible for recognizing, binding, unfolding and translocation of pupylated proteins into the bacterial 20S proteasome core particle. May be essential for opening the gate of the 20S proteasome via an interaction with its C-terminus, thereby allowing substrate entry and access to the site of proteolysis. Thus, the C-termini of the proteasomal ATPase may function like a 'key in a lock' to induce gate opening and therefore regulate proteolysis. The sequence is that of Proteasome-associated ATPase from Mycolicibacterium vanbaalenii (strain DSM 7251 / JCM 13017 / BCRC 16820 / KCTC 9966 / NRRL B-24157 / PYR-1) (Mycobacterium vanbaalenii).